The chain runs to 38 residues: Photosystem I reaction center subunit IX (38 aa).

The helical transmembrane segment at 4 to 24 (FLTTAPVVAAIWFTATAGILI) threads the bilayer.

It belongs to the PsaJ family.

It localises to the cellular thylakoid membrane. Functionally, may help in the organization of the PsaE and PsaF subunits. This is Photosystem I reaction center subunit IX from Synechococcus sp. (strain CC9902).